The following is a 39-amino-acid chain: MGDLSEADSMKHQLQRRDCGRCGLGQICDAGACRPSTMM.

Positions 1 to 15 (MGDLSEADSMKHQLQ) are excised as a propeptide.

Contains 2 disulfide bonds. Expressed by the venom duct.

Its subcellular location is the secreted. The protein is Conotoxin Cl14.7 of Californiconus californicus (California cone).